The chain runs to 307 residues: Transaldolase (307 aa).

Residue K125 is the Schiff-base intermediate with substrate of the active site.

Belongs to the transaldolase family. Type 1 subfamily. In terms of assembly, homodimer.

It localises to the cytoplasm. The catalysed reaction is D-sedoheptulose 7-phosphate + D-glyceraldehyde 3-phosphate = D-erythrose 4-phosphate + beta-D-fructose 6-phosphate. Its pathway is carbohydrate degradation; pentose phosphate pathway; D-glyceraldehyde 3-phosphate and beta-D-fructose 6-phosphate from D-ribose 5-phosphate and D-xylulose 5-phosphate (non-oxidative stage): step 2/3. In terms of biological role, transaldolase is important for the balance of metabolites in the pentose-phosphate pathway. This Pseudomonas aeruginosa (strain LESB58) protein is Transaldolase.